The following is a 365-amino-acid chain: Chorismate synthase (365 aa).

Arg46 contacts NADP(+). Residues Arg123 to Ser125, Asn241 to Gly242, Gly281, Lys296 to Ser300, and Arg322 contribute to the FMN site.

This sequence belongs to the chorismate synthase family. In terms of assembly, homotetramer. Requires FMNH2 as cofactor.

It carries out the reaction 5-O-(1-carboxyvinyl)-3-phosphoshikimate = chorismate + phosphate. It functions in the pathway metabolic intermediate biosynthesis; chorismate biosynthesis; chorismate from D-erythrose 4-phosphate and phosphoenolpyruvate: step 7/7. Catalyzes the anti-1,4-elimination of the C-3 phosphate and the C-6 proR hydrogen from 5-enolpyruvylshikimate-3-phosphate (EPSP) to yield chorismate, which is the branch point compound that serves as the starting substrate for the three terminal pathways of aromatic amino acid biosynthesis. This reaction introduces a second double bond into the aromatic ring system. The chain is Chorismate synthase from Helicobacter pylori (strain HPAG1).